Here is a 445-residue protein sequence, read N- to C-terminus: tRNA(Ile)-lysidine synthase (445 aa).

19–24 (SGGIDS) provides a ligand contact to ATP.

The protein belongs to the tRNA(Ile)-lysidine synthase family.

The protein resides in the cytoplasm. The enzyme catalyses cytidine(34) in tRNA(Ile2) + L-lysine + ATP = lysidine(34) in tRNA(Ile2) + AMP + diphosphate + H(+). Its function is as follows. Ligates lysine onto the cytidine present at position 34 of the AUA codon-specific tRNA(Ile) that contains the anticodon CAU, in an ATP-dependent manner. Cytidine is converted to lysidine, thus changing the amino acid specificity of the tRNA from methionine to isoleucine. This chain is tRNA(Ile)-lysidine synthase, found in Buchnera aphidicola subsp. Schizaphis graminum (strain Sg).